We begin with the raw amino-acid sequence, 664 residues long: MARLVAVVKYSDEDYPFEKRQMPLYIDDSLTMVLEFSDNMLNLDKQQIDTVQLEQFIQHHKMLTEQDLTAALTVTSREVFNALSQLLPCVGCRRCVERLFSQVMQTGIQALDPLSVGANGVLTLSHSFMTDATKLYTLFYVCGSKLNSMIDTIAKNKKGKKNNRCKFHSLDVRKPKPLGGHWMDVWEVMSPECRDEVALIDSNCLLETLENYLQKHRFCADCKNKVHRAFNILTGELDFSKVKGYCANVYQGLRCCPHEGHIHLCCETDFIAHVLGRAEPEFAGGYERRERHAKTIDVAQEEVLTCLGIHLYERLHRIWLKLRAEVQTRQMLFYLGVDALRKSFEVTVEKVQGISRMDQYFKDILEEEKVQELKQEKKRQKKNRRKNKTSCDLPAPHETKSANASQNNDPPGFMESGGDSCNTSEDRNMCAEVTVKNEDLLRSHKMKKGLTPHSNVSDCGYSSSLEGSEPGSQEGSDVACAEGICKHDEAGDDEKDEEEGDSCVECWNNCTKDNIKGKSKKKKKKCKPFKCENENTLKQVPYNTESSDVHSNPNEENKVFNFCMDSEFPRRPWIYHRNEFFSDMSSSESQMRETKSLKELLDESECSSQEEDEITQDDIQAFKETYQTFYRDRQQFRQCLKENFKQFCLHRNPSLLVGKTGAIN.

2 disordered regions span residues 375-425 (QEKK…NTSE) and 447-476 (KKGL…QEGS). A compositionally biased stretch (basic residues) spans 376–388 (EKKRQKKNRRKNK). The segment covering 452-475 (PHSNVSDCGYSSSLEGSEPGSQEG) has biased composition (polar residues).

Its subcellular location is the cytoplasm. In terms of biological role, may be involved in spermatogenesis. In Xenopus laevis (African clawed frog), this protein is Gametogenetin-binding protein 2 (ggnbp2).